A 224-amino-acid chain; its full sequence is Thymidine kinase, cytosolic (224 aa).

The residue at position 13 (Ser-13) is a Phosphoserine. Residues 26 to 33 (GPMFSGKS), 58 to 60 (DTR), and 98 to 101 (DEGQ) contribute to the ATP site. The active-site Proton acceptor is the Glu-99. Substrate is bound at residue Phe-129. Positions 154 and 157 each coordinate Zn(2+). Residues 173–177 (VEVIG) and Tyr-182 each bind substrate. Zn(2+)-binding residues include Cys-186 and Cys-189. The KEN box motif lies at 203 to 205 (KEN).

It belongs to the thymidine kinase family. As to quaternary structure, homotetramer. Tetramerization from dimerization is induced by ATP and increases catalytic efficiency due to a high affinity for thymidine. Tetramerization is inhibited by phosphorylation at Ser-13. Interacts (via the KEN box) with FZR1. Phosphorylated on Ser-13 in mitosis. Phosphorylation of Ser-13 by CDK1 during mitosis reduces homotetramerization and catalytic efficiency when DNA replication is complete and intracellular TK1 is still present at a high level. In terms of processing, polyubiquitinated. Postmitosis, ubiquitination leads to proteasomal degradation. The KEN box sequence located at the C-terminal region targets for degradation by the anaphase promoting complex (APC/C) activated and rate-limited by FZR1.

Its subcellular location is the cytoplasm. The enzyme catalyses thymidine + ATP = dTMP + ADP + H(+). In terms of biological role, cell-cycle-regulated enzyme of importance in nucleotide metabolism. Catalyzes the first enzymatic step in the salvage pathway converting thymidine into thymidine monophosphate. Transcriptional regulation limits expression to the S phase of the cell cycle and transient expression coincides with the oscillation in the intracellular dTTP concentration. The polypeptide is Thymidine kinase, cytosolic (TK1) (Gallus gallus (Chicken)).